Here is a 276-residue protein sequence, read N- to C-terminus: Mitochondrial outer membrane protein porin 6 (276 aa).

Belongs to the eukaryotic mitochondrial porin (TC 1.B.8.1) family.

It localises to the mitochondrion outer membrane. Forms a channel through the mitochondrial outer membrane that allows diffusion of small hydrophilic molecules. The channel adopts an open conformation at low or zero membrane potential and a closed conformation at potentials above 30-40 mV. The open state has a weak anion selectivity whereas the closed state is cation-selective. The protein is Mitochondrial outer membrane protein porin 6 (VDAC6) of Oryza sativa subsp. japonica (Rice).